A 95-amino-acid polypeptide reads, in one-letter code: Histone-like DNA-binding protein (95 aa).

Belongs to the bacterial histone-like protein family.

In Rickettsia felis (strain ATCC VR-1525 / URRWXCal2) (Rickettsia azadi), this protein is Histone-like DNA-binding protein.